A 666-amino-acid polypeptide reads, in one-letter code: DNA mismatch repair protein MutL (666 aa).

This sequence belongs to the DNA mismatch repair MutL/HexB family.

In terms of biological role, this protein is involved in the repair of mismatches in DNA. It is required for dam-dependent methyl-directed DNA mismatch repair. May act as a 'molecular matchmaker', a protein that promotes the formation of a stable complex between two or more DNA-binding proteins in an ATP-dependent manner without itself being part of a final effector complex. In Clostridium botulinum (strain 657 / Type Ba4), this protein is DNA mismatch repair protein MutL.